A 291-amino-acid chain; its full sequence is Polyamine aminopropyltransferase (291 aa).

Residues 5–245 (PGPVSLIEPL…YAVNYIIGSL (241 aa)) enclose the PABS domain. S-methyl-5'-thioadenosine is bound at residue Gln-36. Residues His-67 and Glu-91 each coordinate spermidine. S-methyl-5'-thioadenosine contacts are provided by residues Asp-111 and 143 to 144 (DG). Asp-164 functions as the Proton acceptor in the catalytic mechanism.

Belongs to the spermidine/spermine synthase family. Homodimer or homotetramer.

The protein resides in the cytoplasm. It catalyses the reaction S-adenosyl 3-(methylsulfanyl)propylamine + putrescine = S-methyl-5'-thioadenosine + spermidine + H(+). The protein operates within amine and polyamine biosynthesis; spermidine biosynthesis; spermidine from putrescine: step 1/1. Functionally, catalyzes the irreversible transfer of a propylamine group from the amino donor S-adenosylmethioninamine (decarboxy-AdoMet) to putrescine (1,4-diaminobutane) to yield spermidine. This chain is Polyamine aminopropyltransferase, found in Pyrobaculum islandicum (strain DSM 4184 / JCM 9189 / GEO3).